The sequence spans 205 residues: Nascent polypeptide-associated complex subunit alpha-like protein (205 aa).

Disordered regions lie at residues 1-73 (MPSV…RKAM) and 137-166 (KAPNLSHVTMKPESSTAAQEDEDEVDDTGV). Residues 20–29 (EQQELEHSDE) show a composition bias toward basic and acidic residues. Residues 30 to 51 (PILEDDEDDDDEEDDNDEDDAQ) show a composition bias toward acidic residues. A compositionally biased stretch (basic and acidic residues) spans 56–66 (GEGKSKQSRSE). An NAC-A/B domain is found at 63 to 128 (SRSEKKCRKA…AKIEDLSSQL (66 aa)). Over residues 155–165 (QEDEDEVDDTG) the composition is skewed to acidic residues. The UBA domain occupies 166–203 (VEPKDIELVMTQAGVSRTKAVKALKAADGDIVSAIMDL).

The protein belongs to the NAC-alpha family.

Functionally, may promote appropriate targeting of ribosome-nascent polypeptide complexes. In Pinus taeda (Loblolly pine), this protein is Nascent polypeptide-associated complex subunit alpha-like protein.